Reading from the N-terminus, the 460-residue chain is MLNGNKCHILLLPCPAQGHINPILQFGKRLASHNLLTTLVNTRFLSNSTKSEPGPVNIQCISDGFDPGGMNAAPSRRAYFDRPQSRSGQKHVGLIESLRSRGRPGACFGLRPVPLWAMNVAERSGLRSVAFFTQPCAVDTIYRHVWEGRIKVPVAEPVRLPGLPPLEPSDLPCVRNGFGRVVNPDLLPLRVNQHKNLDKADMMGRNSIYELEADLLDGSRLPLPVKSIGPTVPSTYLDNRIPSDSHYGFNLYTPDTTPYLDWLDSKAPNSVIYVSFGSLSSLSPDQTNEIASGLIATNKSFIWVVRTSELAKLPANFTQENASRGLVVTWCDQLDLLAHVATGCFVTHCGWNSTMEGVALGVPMVGVPQWSDQPMNAKYVEDVWKVGVRAKTYGKDFVRGEEFKRCVEEVMDGERSGKIRENAARWCKLAKDSVSEGGSSDKCIKEFIHQCCNDSKISLV.

H19 serves as the catalytic Proton acceptor. An an anthocyanidin-binding site is contributed by H19. Residues T133, Q333, H348, W351, N352, S353, E356, D372, and Q373 each contribute to the UDP-alpha-D-glucose site.

This sequence belongs to the UDP-glycosyltransferase family. In terms of tissue distribution, mainly expressed in fully developed stigmas.

It carries out the reaction crocetin + UDP-alpha-D-glucose = beta-D-glucosyl crocetin + UDP. It catalyses the reaction beta-D-glucosyl crocetin + UDP-alpha-D-glucose = bis(beta-D-glucosyl) crocetin + UDP. The catalysed reaction is beta-D-gentiobiosyl crocetin + UDP-alpha-D-glucose = beta-D-gentiobiosyl beta-D-glucosyl crocetin + UDP. Its function is as follows. Crocetin glucosyltransferase involved in the synthesis of crocin, one of the apocarotenoids responsible for the color and bitter taste of saffron. This is Crocetin glucosyltransferase 2 (GLT2) from Crocus sativus (Saffron).